The following is a 534-amino-acid chain: Cytochrome P450 714B1 (534 aa).

A topological domain (lumenal) is located at residue Met-1. Residues 2-22 (VVVVAAAMAAASLCCGVAAYL) form a helical; Signal-anchor for type III membrane protein membrane-spanning segment. Topologically, residues 23–534 (YYVLWLAPER…RSKCDWAGFD (512 aa)) are cytoplasmic. Cys-472 serves as a coordination point for heme.

This sequence belongs to the cytochrome P450 family. Heme is required as a cofactor. Highly expressed in spikelet and uppermost internode. Detected in shoots, roots, leaves and anthers.

It is found in the membrane. In terms of biological role, catalyzes the 13-hydroxylation of gibberellins (GAs). Determines the ratio of GA4 and GA1. Converts GA12 into GA53. The polypeptide is Cytochrome P450 714B1 (CYP714B1) (Oryza sativa subsp. japonica (Rice)).